The following is a 346-amino-acid chain: Cell division protein ZipA (346 aa).

Residues 1–6 are Periplasmic-facing; the sequence is MEDLQL. The chain crosses the membrane as a helical span at residues 7-27; sequence VLFVLGAIAIVAVLVHGFWSI. Residues 28 to 346 are Cytoplasmic-facing; it reads RRQQPKSLKD…DYLHRIRANA (319 aa). The tract at residues 116 to 146 is disordered; sequence EPSMAQPDFSLQSPTAKEQHRGPKASRQEPV.

It belongs to the ZipA family. As to quaternary structure, interacts with FtsZ via their C-terminal domains.

It is found in the cell inner membrane. Functionally, essential cell division protein that stabilizes the FtsZ protofilaments by cross-linking them and that serves as a cytoplasmic membrane anchor for the Z ring. Also required for the recruitment to the septal ring of downstream cell division proteins. The chain is Cell division protein ZipA from Shewanella sp. (strain ANA-3).